Consider the following 285-residue polypeptide: MSVTLSRKLIDYVKLAKPKVVSLLDVVAIASYILAFKGNWYNLIPVLIGGSIAAGGSMIINGGLEIEKDKVMKRTSWRPTVKGEVGRKEAYMVGGIACALGSLIGLLANPLTAFFILLGSLVYVFVYSYYLKPRTWLNIVIGGFAGSAAAWAGYAAASNSFNLESLLLGLLVFAWTPGHFWALALRYKRDYANAEIPMLPAIVDDKTAARAIAISNILMIPFALGLMLYLNLIYVIITLAATAVLLYFNVRLMRNPTPEESWISYKFSAPYLAIVMIAAVISFIL.

A run of 7 helical transmembrane segments spans residues Ala-16 to Phe-36, Trp-40 to Ile-60, Leu-106 to Val-126, Trp-136 to Ala-156, Ser-165 to Leu-185, Ile-217 to Ile-237, and Tyr-265 to Leu-285.

It belongs to the UbiA prenyltransferase family. Protoheme IX farnesyltransferase subfamily.

The protein resides in the cell membrane. It catalyses the reaction heme b + (2E,6E)-farnesyl diphosphate + H2O = Fe(II)-heme o + diphosphate. The protein operates within porphyrin-containing compound metabolism; heme O biosynthesis; heme O from protoheme: step 1/1. Its function is as follows. Converts heme B (protoheme IX) to heme O by substitution of the vinyl group on carbon 2 of heme B porphyrin ring with a hydroxyethyl farnesyl side group. The sequence is that of Protoheme IX farnesyltransferase from Sulfolobus acidocaldarius (strain ATCC 33909 / DSM 639 / JCM 8929 / NBRC 15157 / NCIMB 11770).